The sequence spans 270 residues: CASP-like protein 4A1 (270 aa).

A disordered region spans residues 1–110 (MEELEKTQKF…PSFSSSSSTP (110 aa)). Topologically, residues 1-121 (MEELEKTQKF…ESKWASLIRK (121 aa)) are cytoplasmic. Residues 24 to 66 (SSPINFEMSSRSSLHSLPQTTIESPPDSPTLSSIPDSHGSSPH) show a composition bias toward polar residues. Residues 85 to 97 (NGEEEKKVSESRR) are compositionally biased toward basic and acidic residues. Residues 100–110 (RPSFSSSSSTP) are compositionally biased toward low complexity. A helical membrane pass occupies residues 122 to 142 (ALLGFRVIAFVSCLVSFSVMV). Residues 143 to 161 (SDRDKGWAHDSFYNYKEFR) lie on the Extracellular side of the membrane. A helical membrane pass occupies residues 162–182 (FCLAANVIGFVYSGFMICDLV). Residues 183–198 (YLLSTSIRRSRHNLRH) lie on the Cytoplasmic side of the membrane. A helical membrane pass occupies residues 199 to 221 (FLEFGLDQMLAYLLASASTSASI). Residues 222–246 (RVDDWQSNWGADKFPDLARASVALS) are Extracellular-facing. The helical transmembrane segment at 247 to 267 (YVSFVAFAFCSLASGYALCAL) threads the bilayer. Topologically, residues 268–270 (RSI) are cytoplasmic.

This sequence belongs to the Casparian strip membrane proteins (CASP) family. As to quaternary structure, homodimer and heterodimers.

The protein resides in the cell membrane. The sequence is that of CASP-like protein 4A1 from Arabidopsis thaliana (Mouse-ear cress).